A 320-amino-acid chain; its full sequence is ATP-dependent 6-phosphofructokinase (320 aa).

Residue Gly-12 participates in ATP binding. ADP is bound by residues 22 to 26 and 55 to 60; these read RGVVR and RYSVSD. Residues 73-74 and 103-106 contribute to the ATP site; these read RF and GDGS. Mg(2+) is bound at residue Asp-104. Position 126-128 (126-128) interacts with substrate; that stretch reads TID. Catalysis depends on Asp-128, which acts as the Proton acceptor. Residue Arg-155 coordinates ADP. Substrate contacts are provided by residues Arg-163 and 170–172; that span reads MGR. ADP contacts are provided by residues 186–188, Lys-212, and 214–216; these read GCE and KKH. Substrate is bound by residues Glu-223, Arg-244, and 250-253; that span reads HIQR.

The protein belongs to the phosphofructokinase type A (PFKA) family. ATP-dependent PFK group I subfamily. Prokaryotic clade 'B1' sub-subfamily. In terms of assembly, homotetramer. Requires Mg(2+) as cofactor.

It is found in the cytoplasm. The enzyme catalyses beta-D-fructose 6-phosphate + ATP = beta-D-fructose 1,6-bisphosphate + ADP + H(+). The protein operates within carbohydrate degradation; glycolysis; D-glyceraldehyde 3-phosphate and glycerone phosphate from D-glucose: step 3/4. Allosterically activated by ADP and other diphosphonucleosides, and allosterically inhibited by phosphoenolpyruvate. Functionally, catalyzes the phosphorylation of D-fructose 6-phosphate to fructose 1,6-bisphosphate by ATP, the first committing step of glycolysis. The chain is ATP-dependent 6-phosphofructokinase from Salmonella agona (strain SL483).